Consider the following 449-residue polypeptide: Exodeoxyribonuclease 7 large subunit (449 aa).

This sequence belongs to the XseA family. Heterooligomer composed of large and small subunits.

The protein localises to the cytoplasm. It carries out the reaction Exonucleolytic cleavage in either 5'- to 3'- or 3'- to 5'-direction to yield nucleoside 5'-phosphates.. Bidirectionally degrades single-stranded DNA into large acid-insoluble oligonucleotides, which are then degraded further into small acid-soluble oligonucleotides. The polypeptide is Exodeoxyribonuclease 7 large subunit (Lacticaseibacillus paracasei (strain ATCC 334 / BCRC 17002 / CCUG 31169 / CIP 107868 / KCTC 3260 / NRRL B-441) (Lactobacillus paracasei)).